We begin with the raw amino-acid sequence, 102 residues long: Aspartyl/glutamyl-tRNA(Asn/Gln) amidotransferase subunit C (102 aa).

The protein belongs to the GatC family. Heterotrimer of A, B and C subunits.

It carries out the reaction L-glutamyl-tRNA(Gln) + L-glutamine + ATP + H2O = L-glutaminyl-tRNA(Gln) + L-glutamate + ADP + phosphate + H(+). The catalysed reaction is L-aspartyl-tRNA(Asn) + L-glutamine + ATP + H2O = L-asparaginyl-tRNA(Asn) + L-glutamate + ADP + phosphate + 2 H(+). Functionally, allows the formation of correctly charged Asn-tRNA(Asn) or Gln-tRNA(Gln) through the transamidation of misacylated Asp-tRNA(Asn) or Glu-tRNA(Gln) in organisms which lack either or both of asparaginyl-tRNA or glutaminyl-tRNA synthetases. The reaction takes place in the presence of glutamine and ATP through an activated phospho-Asp-tRNA(Asn) or phospho-Glu-tRNA(Gln). The sequence is that of Aspartyl/glutamyl-tRNA(Asn/Gln) amidotransferase subunit C from Leuconostoc citreum (strain KM20).